We begin with the raw amino-acid sequence, 748 residues long: Peptidyl serine alpha-galactosyltransferase (748 aa).

The N-terminal stretch at 1-26 (MVAVFHGPLVLGALLLLLALQHGASA) is a signal peptide. The Extracellular segment spans residues 27 to 710 (EEPGFANRTG…GPSLHSLLGR (684 aa)). 3 N-linked (GlcNAc...) asparagine glycosylation sites follow: Asn33, Asn184, and Asn297. A ShKT domain is found at 415–449 (CQDFHPKCEEWKESGECTKNENYMTENCRKTCDKC). Intrachain disulfides connect Cys415–Cys449, Cys422–Cys442, and Cys431–Cys446. Disordered regions lie at residues 474–576 (ELQP…ADPK) and 611–670 (EVPK…KKNI). Residues 531–565 (SPPPSPPPASPPPVDSPPPMSPPPESPSPDKPPPK) show a composition bias toward pro residues. Residues 611–637 (EVPKRTKATDEEEEAPKAKHAESHLTL) show a composition bias toward basic and acidic residues. Residues 711–731 (LNTWQALVLWLVVVVAFLALV) traverse the membrane as a helical segment. Residues 732–748 (PRIAKLRRRQRSGMRTE) lie on the Cytoplasmic side of the membrane.

Mn(2+) is required as a cofactor.

It is found in the membrane. In terms of biological role, glycosyltransferase involved in the O-galactosylation of several proteins including extensins. Catalyzes the transfer of alpha-galactosyl to Ser residues. Hydroxylation of proline residues adjacent to the serine acceptor is required for activity. Utilizes selectively UDP-galactose as a donor nucleotide sugar. The chain is Peptidyl serine alpha-galactosyltransferase from Chlamydomonas reinhardtii (Chlamydomonas smithii).